The primary structure comprises 66 residues: Putative membrane protein insertion efficiency factor (66 aa).

It belongs to the UPF0161 family.

The protein localises to the cell inner membrane. Its function is as follows. Could be involved in insertion of integral membrane proteins into the membrane. In Parasynechococcus marenigrum (strain WH8102), this protein is Putative membrane protein insertion efficiency factor.